A 418-amino-acid chain; its full sequence is Arrestin domain-containing protein 4 (418 aa).

2 consecutive short sequence motifs (PPxY motif) follow at residues 350–353 (PPNY) and 395–398 (PPLY).

This sequence belongs to the arrestin family. Interacts with ADRB2. Interacts (via PPxY motifs) with ITCH, NEDD4L and WWP2. Interacts with AVPR2. Identified in a complex containing at least ARRDC4, AVPR2 and HGS. Interacts with SLC11A2; controls the incorporation of SLC11A2 into extracellular vesicles through an ubiquitination-dependent mechanism. Interacts with TRIM65.

Its subcellular location is the early endosome. The protein localises to the cell membrane. It is found in the cytoplasmic vesicle. In terms of biological role, functions as an adapter recruiting ubiquitin-protein ligases to their specific substrates. Plays a role in endocytosis of activated G protein-coupled receptors (GPCRs). Through an ubiquitination-dependent mechanism also plays a role in the incorporation of SLC11A2 into extracellular vesicles. May play a role in glucose uptake. Participates in innate immune response by promoting IFIH1/MDA5 activation through interaction with TRIM65. This chain is Arrestin domain-containing protein 4 (ARRDC4), found in Homo sapiens (Human).